The sequence spans 558 residues: Formate--tetrahydrofolate ligase (558 aa).

66-73 (TPAGEGKT) serves as a coordination point for ATP.

Belongs to the formate--tetrahydrofolate ligase family.

It carries out the reaction (6S)-5,6,7,8-tetrahydrofolate + formate + ATP = (6R)-10-formyltetrahydrofolate + ADP + phosphate. Its pathway is one-carbon metabolism; tetrahydrofolate interconversion. The chain is Formate--tetrahydrofolate ligase from Neisseria gonorrhoeae (strain NCCP11945).